Reading from the N-terminus, the 353-residue chain is MLDYDALVDQALQLLEQNINKNYRVCIGIIGPPGSGKSTVAEKLKEKINSRYHDYLAHEHHAEVAVRPLSSAIDLTGDLSVANKELQAEIKAGFYSHVEDNNFKPVQVKESDGSTLIVGRGGLDNAVRIKPLRKEANLSPTKPDIAQIVPMDGFHLSRKHLDHFKDPTVAHLRRGSPFTFDSNNFLQLCKVLSKTCSLDPNYHSTGPETVNEDNTNSLFDNVTNSFIDLPEISFPGFDHAIKDPVADQHTVHKFTRILILEGLYLLLNQENWSLIYDAIASTGAFIFWNIVIDEDVIEQRVAKRHVKSGICLSLEEGIQRFRANDQINGRLIQSQSVRNANKNVKNVYDIRND.

31-39 (GPPGSGKST) provides a ligand contact to ATP.

It belongs to the YFH7 family.

Functionally, ATP-dependent kinase that could be involved in endoplasmic reticulum membrane assembly. The sequence is that of ATP-dependent kinase YFH7 (YFH7) from Kluyveromyces lactis (strain ATCC 8585 / CBS 2359 / DSM 70799 / NBRC 1267 / NRRL Y-1140 / WM37) (Yeast).